The sequence spans 53 residues: Large ribosomal subunit protein bL32c (53 aa).

The protein belongs to the bacterial ribosomal protein bL32 family.

It is found in the plastid. The protein resides in the chloroplast. This chain is Large ribosomal subunit protein bL32c, found in Coffea arabica (Arabian coffee).